The following is a 530-amino-acid chain: Ubiquitin carboxyl-terminal hydrolase 17-like protein 17 (530 aa).

One can recognise a USP domain in the interval 80-375; sequence AGLQNMGNTC…QAYVLFYIQK (296 aa). Catalysis depends on C89, which acts as the Nucleophile. H334 functions as the Proton acceptor in the catalytic mechanism. 2 stretches are compositionally biased toward basic and acidic residues: residues 382–392 and 398–411; these read SESVSRGREPR and DTDRRATQGELKRD. 2 disordered regions span residues 382-411 and 477-530; these read SESVSRGREPRALGAEDTDRRATQGELKRD and NHHP…LVCQ. Over residues 493–505 the composition is skewed to polar residues; it reads TPTHQESMNTGTL. Positions 510-524 are enriched in basic residues; sequence GRARRSKGKNKHSKR.

Belongs to the peptidase C19 family. USP17 subfamily.

It localises to the nucleus. It is found in the endoplasmic reticulum. The catalysed reaction is Thiol-dependent hydrolysis of ester, thioester, amide, peptide and isopeptide bonds formed by the C-terminal Gly of ubiquitin (a 76-residue protein attached to proteins as an intracellular targeting signal).. In terms of biological role, deubiquitinating enzyme that removes conjugated ubiquitin from specific proteins to regulate different cellular processes that may include cell proliferation, progression through the cell cycle, apoptosis, cell migration, and the cellular response to viral infection. The sequence is that of Ubiquitin carboxyl-terminal hydrolase 17-like protein 17 (USP17L17) from Homo sapiens (Human).